A 212-amino-acid chain; its full sequence is Endoplasmic reticulum vesicle protein 25 (212 aa).

An N-terminal signal peptide occupies residues 1 to 21; the sequence is MKSFAACVLLLCALFFEQVFA. Topologically, residues 22 to 181 are lumenal; that stretch reads VRFDIPASTK…TNESTNRRVR (160 aa). One can recognise a GOLD domain in the interval 34–122; the sequence is QVCIRDFVSE…SRSIELDIES (89 aa). The helical transmembrane segment at 182–202 threads the bilayer; the sequence is NFSIAVIVVLVALGAWQVNYM. Over 203 to 212 the chain is Cytoplasmic; the sequence is KNFFRAKHII.

The protein belongs to the EMP24/GP25L family.

It localises to the endoplasmic reticulum membrane. It is found in the golgi apparatus membrane. Its function is as follows. Constituent of COPII-coated endoplasmic reticulum-derived transport vesicles. Required for efficient transport of a subset of secretory proteins to the Golgi. Facilitates retrograde transport from the Golgi to the endoplasmic reticulum. The polypeptide is Endoplasmic reticulum vesicle protein 25 (ERV25) (Kluyveromyces lactis (strain ATCC 8585 / CBS 2359 / DSM 70799 / NBRC 1267 / NRRL Y-1140 / WM37) (Yeast)).